The following is a 607-amino-acid chain: Glycosyltransferase 25 family member (607 aa).

The first 22 residues, 1 to 22 (MKPVSCVGLLVLLVGVLVTVKG), serve as a signal peptide directing secretion. N-linked (GlcNAc...) asparagine glycans are attached at residues asparagine 226, asparagine 254, asparagine 514, and asparagine 565. The disordered stretch occupies residues 566–607 (DTSDSSAEKKGDKEQLSSKTLMDSTISRDEHELSVANRKSEL). Basic and acidic residues-rich tracts occupy residues 571–581 (SAEKKGDKEQL) and 591–607 (ISRD…KSEL). Positions 604 to 607 (KSEL) match the Prevents secretion from ER motif.

Belongs to the glycosyltransferase 25 family.

The protein resides in the endoplasmic reticulum lumen. The protein is Glycosyltransferase 25 family member of Aedes aegypti (Yellowfever mosquito).